The chain runs to 617 residues: DNA double-strand break repair protein Mre11 (617 aa).

The Mn(2+) site is built by Asp-12, His-14, Asp-53, and Asn-88. Residue His-89 is the Proton donor of the active site. Residues His-158, Asp-189, and His-191 each contribute to the Mn(2+) site. The segment covering 395-432 (SPVDPSSSVSSIESSGSVSPIDSVSTVSPSSPSSSAII) has biased composition (low complexity). 2 disordered regions span residues 395–437 (SPVD…EPEE) and 513–617 (VEDE…GDYL). Residues 529 to 547 (APQSSSPVSFSDNSQTGFS) show a composition bias toward polar residues. The span at 549 to 559 (ISPPESIPSPE) shows a compositional bias: low complexity. A compositionally biased stretch (basic and acidic residues) spans 560 to 583 (ILKENSEADADEKPVDGKLSEEKP).

It belongs to the MRE11/RAD32 family. As to quaternary structure, homodimer. Forms a heterotetramer composed of two Mre11 subunits and two Rad50 subunits. Requires Mn(2+) as cofactor.

Nuclease activity is regulated by Rad50. Part of the Rad50/Mre11 complex, which is involved in the early steps of DNA double-strand break (DSB) repair. The complex may facilitate opening of the processed DNA ends to aid in the recruitment of HerA and NurA. Mre11 binds to DSB ends and has both double-stranded 3'-5' exonuclease activity and single-stranded endonuclease activity. The protein is DNA double-strand break repair protein Mre11 of Methanosarcina mazei (strain ATCC BAA-159 / DSM 3647 / Goe1 / Go1 / JCM 11833 / OCM 88) (Methanosarcina frisia).